Here is a 472-residue protein sequence, read N- to C-terminus: UDP-N-acetylmuramate--L-alanine ligase (472 aa).

ATP is bound at residue 119–125 (GTHGKTT).

This sequence belongs to the MurCDEF family.

It is found in the cytoplasm. The enzyme catalyses UDP-N-acetyl-alpha-D-muramate + L-alanine + ATP = UDP-N-acetyl-alpha-D-muramoyl-L-alanine + ADP + phosphate + H(+). It participates in cell wall biogenesis; peptidoglycan biosynthesis. Functionally, cell wall formation. This is UDP-N-acetylmuramate--L-alanine ligase from Caulobacter sp. (strain K31).